A 224-amino-acid polypeptide reads, in one-letter code: N-(5'-phosphoribosyl)anthranilate isomerase (224 aa).

It belongs to the TrpF family.

The catalysed reaction is N-(5-phospho-beta-D-ribosyl)anthranilate = 1-(2-carboxyphenylamino)-1-deoxy-D-ribulose 5-phosphate. It participates in amino-acid biosynthesis; L-tryptophan biosynthesis; L-tryptophan from chorismate: step 3/5. The sequence is that of N-(5'-phosphoribosyl)anthranilate isomerase from Sinorhizobium fredii (strain NBRC 101917 / NGR234).